The chain runs to 573 residues: MHVDTLVKNVRVYNAYTQQFIASDVAIDEGRFVAIGHSDELESIQANTIIDGQGQQMIPGLIDIHLHIESSMVTPETFSWALLRNGVTTIVAEPHEMANVFGIEGIKAMIEASAACTVDMKYAIPSSVPATSLETTGGAIGIAEMDELMDTEDIQCLGEIMNYVDVLSKPDSKTNQILKHFRRSYPALPIEGHVPKLTGLDLHQIVAAGIGSDHTHQTREGMEARIKAGMFLEIQEKSMTDDVLSYLIENDTREHFCFVTDDVMADSLYKRGHLNVLANKALAAGMKFEDVIYACTMAPAKRMKLEDRGAIAPGKIADFILLAEDGQFVFSAVYKDGMLAFDAASPYKQTPKPRQFPPHFYESVKLAPLQEEDFHVVADRQDGIHVCRVMNVADGSTFTKETQERVPVANGLLQWQDSDFRLIATFERYGKTGGRAHGLIAGDILQRGAVATTYSHDNHNLLVVGANILDMVCAANAVIQAQGGCAVVENGEVKAMLELPVGGILSEAPLAELAPKVESFVKALTALGYKHYNPIMSLSTLSLPVSPALKITDFGLIDVNNGQVVPLFVNEKS.

It belongs to the metallo-dependent hydrolases superfamily. Adenine deaminase family. Mn(2+) is required as a cofactor.

It catalyses the reaction adenine + H2O + H(+) = hypoxanthine + NH4(+). The chain is Adenine deaminase 2 from Shouchella clausii (strain KSM-K16) (Alkalihalobacillus clausii).